Reading from the N-terminus, the 161-residue chain is Nucleotide-binding protein PFLU_4927 (161 aa).

It belongs to the YajQ family.

In terms of biological role, nucleotide-binding protein. This chain is Nucleotide-binding protein PFLU_4927, found in Pseudomonas fluorescens (strain SBW25).